We begin with the raw amino-acid sequence, 159 residues long: Nucleoside diphosphate kinase (159 aa).

ATP-binding residues include Lys-14, Phe-62, Arg-90, Thr-96, and Arg-107. His-123 acts as the Pros-phosphohistidine intermediate in catalysis.

It belongs to the NDK family. Mg(2+) is required as a cofactor.

The protein localises to the cytoplasm. The enzyme catalyses a 2'-deoxyribonucleoside 5'-diphosphate + ATP = a 2'-deoxyribonucleoside 5'-triphosphate + ADP. The catalysed reaction is a ribonucleoside 5'-diphosphate + ATP = a ribonucleoside 5'-triphosphate + ADP. Functionally, major role in the synthesis of nucleoside triphosphates other than ATP. The ATP gamma phosphate is transferred to the NDP beta phosphate via a ping-pong mechanism, using a phosphorylated active-site intermediate. In Pyrococcus abyssi (strain GE5 / Orsay), this protein is Nucleoside diphosphate kinase.